The primary structure comprises 75 residues: ATP synthase subunit c (75 aa).

The next 2 membrane-spanning stretches (helical) occupy residues 9 to 29 (IGAG…GIIF) and 54 to 74 (FALA…ILFA).

The protein belongs to the ATPase C chain family. In terms of assembly, F-type ATPases have 2 components, F(1) - the catalytic core - and F(0) - the membrane proton channel. F(1) has five subunits: alpha(3), beta(3), gamma(1), delta(1), epsilon(1). F(0) has three main subunits: a(1), b(2) and c(10-14). The alpha and beta chains form an alternating ring which encloses part of the gamma chain. F(1) is attached to F(0) by a central stalk formed by the gamma and epsilon chains, while a peripheral stalk is formed by the delta and b chains.

Its subcellular location is the cell inner membrane. F(1)F(0) ATP synthase produces ATP from ADP in the presence of a proton or sodium gradient. F-type ATPases consist of two structural domains, F(1) containing the extramembraneous catalytic core and F(0) containing the membrane proton channel, linked together by a central stalk and a peripheral stalk. During catalysis, ATP synthesis in the catalytic domain of F(1) is coupled via a rotary mechanism of the central stalk subunits to proton translocation. In terms of biological role, key component of the F(0) channel; it plays a direct role in translocation across the membrane. A homomeric c-ring of between 10-14 subunits forms the central stalk rotor element with the F(1) delta and epsilon subunits. The sequence is that of ATP synthase subunit c from Pelagibacter ubique (strain HTCC1062).